A 104-amino-acid chain; its full sequence is Thioredoxin (104 aa).

The Thioredoxin domain maps to 2–104 (AIVKATDQSF…ALQELVNKHL (103 aa)). Cys-29 and Cys-32 are disulfide-bonded.

This sequence belongs to the thioredoxin family.

Participates in various redox reactions through the reversible oxidation of its active center dithiol to a disulfide and catalyzes dithiol-disulfide exchange reactions. The polypeptide is Thioredoxin (trxA) (Bacillus subtilis (strain 168)).